An 829-amino-acid chain; its full sequence is Leucine--tRNA ligase (829 aa).

The 'HIGH' region motif lies at 40-50 (PYPSGNIHMGH). Positions 594 to 598 (KMSKS) match the 'KMSKS' region motif. Lys597 is a binding site for ATP.

It belongs to the class-I aminoacyl-tRNA synthetase family.

The protein resides in the cytoplasm. The catalysed reaction is tRNA(Leu) + L-leucine + ATP = L-leucyl-tRNA(Leu) + AMP + diphosphate. In Anaplasma marginale (strain St. Maries), this protein is Leucine--tRNA ligase.